We begin with the raw amino-acid sequence, 274 residues long: Lectizyme (274 aa).

The N-terminal stretch at 1 to 16 (MKFFAVFALCVASVSA) is a signal peptide. The 237-residue stretch at 32–268 (IINGHEAEKG…FDKWIEDSIE (237 aa)) folds into the Peptidase S1 domain. C57 and C73 are disulfide-bonded. Catalysis depends on charge relay system residues H72 and D119. Intrachain disulfides connect C188/C204 and C215/C244. The active-site Charge relay system is S219.

It belongs to the peptidase S1 family. Expressed in the midgut.

The protein resides in the secreted. Protein with lectin and protease activity involved in the establishment of trypanosome infections in tsetse flies. Binds D-glucosamine and agglutinates bloodstream-form trypanosomes and rabbit red blood cells. Capable of inducing transformation of bloodstream-form trypanosomes into procyclic (midgut) forms in vitro. In Glossina austeni (Savannah tsetse fly), this protein is Lectizyme (Gpl).